A 395-amino-acid chain; its full sequence is NAD(P)H-quinone oxidoreductase subunit H, chloroplastic (395 aa).

Belongs to the complex I 49 kDa subunit family. As to quaternary structure, NDH is composed of at least 16 different subunits, 5 of which are encoded in the nucleus.

Its subcellular location is the plastid. It localises to the chloroplast thylakoid membrane. It catalyses the reaction a plastoquinone + NADH + (n+1) H(+)(in) = a plastoquinol + NAD(+) + n H(+)(out). It carries out the reaction a plastoquinone + NADPH + (n+1) H(+)(in) = a plastoquinol + NADP(+) + n H(+)(out). In terms of biological role, NDH shuttles electrons from NAD(P)H:plastoquinone, via FMN and iron-sulfur (Fe-S) centers, to quinones in the photosynthetic chain and possibly in a chloroplast respiratory chain. The immediate electron acceptor for the enzyme in this species is believed to be plastoquinone. Couples the redox reaction to proton translocation, and thus conserves the redox energy in a proton gradient. The protein is NAD(P)H-quinone oxidoreductase subunit H, chloroplastic of Chloranthus spicatus (Chulantree).